Consider the following 635-residue polypeptide: BTB/POZ domain-containing protein SETH6 (635 aa).

The 66-residue stretch at serine 39–serine 104 folds into the BTB domain. An NPH3 domain is found at aspartate 206–arginine 494. Tyrosine 435 is modified (phosphotyrosine). A disordered region spans residues glutamine 604–serine 635. Residues lysine 612–phenylalanine 624 are compositionally biased toward basic and acidic residues. The span at methionine 625–serine 635 shows a compositional bias: basic residues.

Belongs to the NPH3 family.

Its pathway is protein modification; protein ubiquitination. May act as a substrate-specific adapter of an E3 ubiquitin-protein ligase complex (CUL3-RBX1-BTB) which mediates the ubiquitination and subsequent proteasomal degradation of target proteins. The sequence is that of BTB/POZ domain-containing protein SETH6 (SETH6) from Arabidopsis thaliana (Mouse-ear cress).